A 277-amino-acid polypeptide reads, in one-letter code: Probable endonuclease 4 (277 aa).

9 residues coordinate Zn(2+): His-67, His-107, Glu-142, Asp-176, His-179, His-211, Asp-224, His-226, and Glu-256.

The protein belongs to the AP endonuclease 2 family. It depends on Zn(2+) as a cofactor.

It carries out the reaction Endonucleolytic cleavage to 5'-phosphooligonucleotide end-products.. Endonuclease IV plays a role in DNA repair. It cleaves phosphodiester bonds at apurinic or apyrimidinic (AP) sites, generating a 3'-hydroxyl group and a 5'-terminal sugar phosphate. This Clostridium botulinum (strain Alaska E43 / Type E3) protein is Probable endonuclease 4.